The primary structure comprises 644 residues: Biosynthetic arginine decarboxylase (644 aa).

Position 105 is an N6-(pyridoxal phosphate)lysine (lysine 105). 287–297 (LDVGGGLGIDY) contacts substrate.

Belongs to the Orn/Lys/Arg decarboxylase class-II family. SpeA subfamily. Requires Mg(2+) as cofactor. Pyridoxal 5'-phosphate serves as cofactor.

It catalyses the reaction L-arginine + H(+) = agmatine + CO2. Its function is as follows. Catalyzes the biosynthesis of agmatine from arginine. This chain is Biosynthetic arginine decarboxylase, found in Parasynechococcus marenigrum (strain WH8102).